The sequence spans 192 residues: Crossover junction endodeoxyribonuclease RuvC (192 aa).

Catalysis depends on residues Asp-9, Glu-70, and Asp-143. Asp-9, Glu-70, and Asp-143 together coordinate Mg(2+). Residues 161–192 (GASVATTGPGSSSLTPAQRAWAEAEAKARRAR) form a disordered region. Over residues 163–176 (SVATTGPGSSSLTP) the composition is skewed to polar residues. The span at 182–192 (AEAEAKARRAR) shows a compositional bias: basic and acidic residues.

The protein belongs to the RuvC family. Homodimer which binds Holliday junction (HJ) DNA. The HJ becomes 2-fold symmetrical on binding to RuvC with unstacked arms; it has a different conformation from HJ DNA in complex with RuvA. In the full resolvosome a probable DNA-RuvA(4)-RuvB(12)-RuvC(2) complex forms which resolves the HJ. Requires Mg(2+) as cofactor.

The protein resides in the cytoplasm. The enzyme catalyses Endonucleolytic cleavage at a junction such as a reciprocal single-stranded crossover between two homologous DNA duplexes (Holliday junction).. In terms of biological role, the RuvA-RuvB-RuvC complex processes Holliday junction (HJ) DNA during genetic recombination and DNA repair. Endonuclease that resolves HJ intermediates. Cleaves cruciform DNA by making single-stranded nicks across the HJ at symmetrical positions within the homologous arms, yielding a 5'-phosphate and a 3'-hydroxyl group; requires a central core of homology in the junction. The consensus cleavage sequence is 5'-(A/T)TT(C/G)-3'. Cleavage occurs on the 3'-side of the TT dinucleotide at the point of strand exchange. HJ branch migration catalyzed by RuvA-RuvB allows RuvC to scan DNA until it finds its consensus sequence, where it cleaves and resolves the cruciform DNA. The protein is Crossover junction endodeoxyribonuclease RuvC of Pseudarthrobacter chlorophenolicus (strain ATCC 700700 / DSM 12829 / CIP 107037 / JCM 12360 / KCTC 9906 / NCIMB 13794 / A6) (Arthrobacter chlorophenolicus).